Reading from the N-terminus, the 481-residue chain is ATP synthase subunit beta, chloroplastic (481 aa).

Residue glycine 161–threonine 168 coordinates ATP.

This sequence belongs to the ATPase alpha/beta chains family. F-type ATPases have 2 components, CF(1) - the catalytic core - and CF(0) - the membrane proton channel. CF(1) has five subunits: alpha(3), beta(3), gamma(1), delta(1), epsilon(1). CF(0) has four main subunits: a(1), b(1), b'(1) and c(9-12).

It is found in the plastid. It localises to the chloroplast thylakoid membrane. It carries out the reaction ATP + H2O + 4 H(+)(in) = ADP + phosphate + 5 H(+)(out). In terms of biological role, produces ATP from ADP in the presence of a proton gradient across the membrane. The catalytic sites are hosted primarily by the beta subunits. The sequence is that of ATP synthase subunit beta, chloroplastic from Pylaiella littoralis (Seaweed).